Reading from the N-terminus, the 341-residue chain is L-threonine 3-dehydrogenase (341 aa).

Cys38 provides a ligand contact to Zn(2+). Catalysis depends on charge relay system residues Thr40 and His43. Residues His63, Glu64, Cys93, Cys96, Cys99, and Cys107 each coordinate Zn(2+). NAD(+)-binding positions include Ile175, Asp195, Arg200, 262–264 (LGI), and 286–287 (IY).

Belongs to the zinc-containing alcohol dehydrogenase family. In terms of assembly, homotetramer. It depends on Zn(2+) as a cofactor.

It localises to the cytoplasm. The catalysed reaction is L-threonine + NAD(+) = (2S)-2-amino-3-oxobutanoate + NADH + H(+). Its pathway is amino-acid degradation; L-threonine degradation via oxydo-reductase pathway; glycine from L-threonine: step 1/2. Catalyzes the NAD(+)-dependent oxidation of L-threonine to 2-amino-3-ketobutyrate. The protein is L-threonine 3-dehydrogenase of Shewanella loihica (strain ATCC BAA-1088 / PV-4).